The following is an 810-amino-acid chain: Glycerol-3-phosphate acyltransferase (810 aa).

Positions 305-310 match the HXXXXD motif motif; that stretch reads CHRSHI.

This sequence belongs to the GPAT/DAPAT family.

The protein localises to the cell inner membrane. It carries out the reaction sn-glycerol 3-phosphate + an acyl-CoA = a 1-acyl-sn-glycero-3-phosphate + CoA. It participates in phospholipid metabolism; CDP-diacylglycerol biosynthesis; CDP-diacylglycerol from sn-glycerol 3-phosphate: step 1/3. The chain is Glycerol-3-phosphate acyltransferase from Haemophilus influenzae (strain 86-028NP).